A 179-amino-acid chain; its full sequence is Peptidyl-tRNA hydrolase (179 aa).

Tyr15 is a tRNA binding site. The active-site Proton acceptor is His20. Residues Tyr66, Asn68, and Asn114 each contribute to the tRNA site.

It belongs to the PTH family. Monomer.

The protein localises to the cytoplasm. The enzyme catalyses an N-acyl-L-alpha-aminoacyl-tRNA + H2O = an N-acyl-L-amino acid + a tRNA + H(+). Hydrolyzes ribosome-free peptidyl-tRNAs (with 1 or more amino acids incorporated), which drop off the ribosome during protein synthesis, or as a result of ribosome stalling. Its function is as follows. Catalyzes the release of premature peptidyl moieties from peptidyl-tRNA molecules trapped in stalled 50S ribosomal subunits, and thus maintains levels of free tRNAs and 50S ribosomes. In Chlamydia muridarum (strain MoPn / Nigg), this protein is Peptidyl-tRNA hydrolase.